Here is a 2524-residue protein sequence, read N- to C-terminus: Neurogenic locus notch homolog protein 1 (2524 aa).

The signal sequence occupies residues 1–19; sequence MDRIGLAVLLCSLPVLTQG. EGF-like domains are found at residues 20–57, 58–99, 102–140, and 141–177; these read LRCT…ERCQ, FPNP…KVCL, VDNA…DSCQ, and QADP…ATCK. Topologically, residues 20–1729 are extracellular; sequence LRCTQTAEMC…METPKPSTLY (1710 aa). Disulfide bonds link C22–C35, C29–C45, C47–C56, C62–C74, C68–C87, C89–C98, C106–C117, C111–C128, C130–C139, C145–C156, C150–C165, C167–C176, C183–C194, C188–C203, C205–C214, C221–C232, C226–C242, C244–C253, C260–C271, C265–C280, C282–C291, C298–C311, C305–C320, C322–C331, C338–C349, C343–C358, C360–C369, C375–C386, C380–C397, C399–C408, C415–C428, C422–C437, and C439–C448. One can recognise an EGF-like 5; calcium-binding domain in the interval 179–215; it reads DINECSQNPCKNGGQCINEFGSYRCTCQNRFTGRNCD. Residues 217-254 form the EGF-like 6 domain; sequence PYVPCNPSPCLNGGTCRQTDDTSYDCTCLPGFSGQNCE. T231 is a glycosylation site (O-linked (Fuc...) threonine; alternate). T231 carries an O-linked (GalNAc...) threonine; alternate glycan. Residues 256-292 enclose the EGF-like 7; calcium-binding domain; sequence NIDDCPSNNCRNGGTCVDGVNTYNCQCPPDWTGQYCT. Residues 294 to 332 enclose the EGF-like 8; calcium-binding domain; that stretch reads DVDECQLMPNACQNGGTCHNTYGGYNCVCVNGWTGEDCS. Residues 334–370 enclose the EGF-like 9; calcium-binding domain; that stretch reads NIDDCANAACHSGATCHDRVASFYCECPHGRTGLLCH. One can recognise an EGF-like 10 domain in the interval 371 to 409; sequence LDNACISNPCNEGSNCDTNPVNGKAICTCPPGYTGPACN. In terms of domain architecture, EGF-like 11; calcium-binding spans 411-449; that stretch reads DVDECSLGANPCEHGGRCTNTLGSFQCNCPQGYAGPRCE. T431 and S434 together coordinate Ca(2+). S434 carries O-linked (Glc...) serine glycosylation. The Ca(2+) site is built by D451, V452, and E454. The 37-residue stretch at 451 to 487 folds into the EGF-like 12; calcium-binding domain; sequence DVNECLSNPCQNDSTCLDQIGEFQCICMPGYEGLYCE. Cystine bridges form between C455-C466, C460-C475, and C477-C486. O-linked (Glc...) serine glycosylation occurs at S457. N462 is a glycosylation site (N-linked (GlcNAc...) asparagine). O-linked (Fuc...) threonine glycosylation occurs at T465. Ca(2+) is bound by residues D468 and Q469. Ca(2+) contacts are provided by N489, I490, and E492. One can recognise an EGF-like 13; calcium-binding domain in the interval 489 to 525; sequence NIDECASNPCLHNGKCIDKINEFRCDCPTGFSGNLCQ. Intrachain disulfides connect C493–C504, C498–C513, C515–C524, C531–C542, C536–C551, C553–C562, C569–C579, C574–C588, C590–C599, C606–C617, C611–C626, C628–C637, C644–C654, C649–C663, C665–C674, C681–C692, C686–C701, C703–C712, C719–C729, C724–C738, C740–C749, C756–C767, C761–C776, C778–C787, C794–C805, C799–C814, C816–C825, C832–C843, C837–C854, C856–C865, C872–C883, C877–C892, C894–C903, C910–C921, C915–C930, C932–C941, C948–C959, C953–C968, C970–C979, C986–C997, C991–C1006, C1008–C1017, C1024–C1035, C1029–C1044, C1046–C1055, C1062–C1073, C1067–C1082, C1084–C1093, C1100–C1121, C1115–C1130, C1132–C1141, C1148–C1159, C1153–C1168, C1170–C1179, C1186–C1197, C1191–C1206, C1208–C1217, C1224–C1243, C1237–C1252, C1254–C1263, C1270–C1283, C1275–C1292, C1294–C1303, C1310–C1321, C1315–C1333, C1335–C1344, C1351–C1362, C1356–C1371, C1373–C1382, C1390–C1401, C1395–C1412, C1414–C1423, C1447–C1470, C1452–C1465, and C1461–C1477. Residue S495 is glycosylated (O-linked (Glc...) serine). 2 residues coordinate Ca(2+): D506 and K507. An EGF-like 14; calcium-binding domain is found at 527 to 563; the sequence is DFDECTSTPCKNGAKCLDGPNSYTCQCTEGFTGRHCE. Residues 565–600 form the EGF-like 15; calcium-binding domain; it reads DINECIPDPCHYGTCKDGIATFTCLCRPGYTGRLCD. Residues 602–638 form the EGF-like 16; calcium-binding domain; sequence DINECLSKPCLNGGQCTDRENGYICTCPKGTTGVNCE. The region spanning 640 to 675 is the EGF-like 17 domain; sequence KIDDCASNLCDNGKCIDKIDGYECTCEPGYTGKLCN. Positions 677 to 713 constitute an EGF-like 18; calcium-binding domain; it reads NINECDSNPCRNGGTCKDQINGFTCVCPDGYHDHMCL. One can recognise an EGF-like 19; calcium-binding domain in the interval 715-750; the sequence is EVNECNSNPCIHGACHDGVNGYKCDCEAGWSGSNCD. The EGF-like 20; calcium-binding domain maps to 752–788; the sequence is NNNECESNPCMNGGTCKDMTGAYICTCKAGFSGPNCQ. The region spanning 790–826 is the EGF-like 21; calcium-binding domain; sequence NINECSSNPCLNHGTCIDDVAGYKCNCMLPYTGAICE. The EGF-like 22 domain maps to 828–866; that stretch reads VLAPCAGSPCKNGGRCKESEDFETFSCECPPGWQGQTCE. An EGF-like 23; calcium-binding domain is found at 868-904; it reads DMNECVNRPCRNGATCQNTNGSYKCNCKPGYTGRNCE. An N-linked (GlcNAc...) asparagine glycan is attached at N887. In terms of domain architecture, EGF-like 24; calcium-binding spans 906-942; the sequence is DIDDCQPNPCHNGGSCSDGINMFFCNCPAGFRGPKCE. One can recognise an EGF-like 25; calcium-binding domain in the interval 944-980; it reads DINECASNPCKNGANCTDCVNSYTCTCQPGFSGIHCE. N-linked (GlcNAc...) asparagine glycosylation occurs at N958. The EGF-like 26 domain maps to 982–1018; it reads NTPDCTESSCFNGGTCIDGINTFTCQCPPGFTGSYCQ. One can recognise an EGF-like 27; calcium-binding domain in the interval 1020 to 1056; it reads DINECDSKPCLNGGTCQDSYGTYKCTCPQGYTGLNCQ. EGF-like domains lie at 1058 to 1094 and 1096 to 1142; these read LVRW…VYCD and PSVS…SYCE. The region spanning 1144–1180 is the EGF-like 30; calcium-binding domain; the sequence is QVDECSPNPCQNGATCTDYLGGYSCECVAGYHGVNCS. N1178 carries N-linked (GlcNAc...) asparagine glycosylation. The region spanning 1182 to 1218 is the EGF-like 31; calcium-binding domain; it reads EINECLSHPCQNGGTCIDLINTYKCSCPRGTQGVHCE. An EGF-like 32; calcium-binding domain is found at 1220 to 1264; that stretch reads NVDDCTPFYDSFTLEPKCFNNGKCIDRVGGYNCICPPGFVGERCE. 4 EGF-like domains span residues 1266-1304, 1306-1346, 1347-1383, and 1386-1424; these read DVNE…RRCE, VVDG…TCEY, DSRT…ATCQ, and VISP…LFCH. Residue T1400 is glycosylated (O-linked (Fuc...) threonine; alternate). A glycan (O-linked (GalNAc...) threonine; alternate) is linked at T1400. LNR repeat units lie at residues 1447-1487, 1488-1529, and 1530-1564; these read CENE…PWKN, CTQS…CNPL, and YDQY…NMPE. N-linked (GlcNAc...) asparagine glycosylation occurs at N1487. 5 cysteine pairs are disulfide-bonded: C1488–C1512, C1494–C1507, C1503–C1519, C1534–C1547, and C1543–C1559. An N-linked (GlcNAc...) asparagine glycan is attached at N1508. N-linked (GlcNAc...) asparagine glycosylation occurs at N1584. The helical transmembrane segment at 1730-1750 threads the bilayer; it reads PMLSMLVIPLLIIFVFMMVIV. Residues 1751–2524 lie on the Cytoplasmic side of the membrane; that stretch reads NKKRRREHGQ…QRTHIPEAFK (774 aa). ANK repeat units follow at residues 1876-1919, 1924-1953, 1957-1987, 1991-2020, 2024-2053, and 2057-2086; these read DGFT…QLHN, TGET…DANV, MGRT…DLDA, DGTT…DVNA, FGKS…NKDM, and KEET…NRDI. 3 disordered regions span residues 2144–2230, 2369–2407, and 2451–2524; these read NMKP…LNHL, MQAQ…FCSS, and LTPP…EAFK. Polar residues-rich tracts occupy residues 2180 to 2192 and 2208 to 2230; these read GKTT…SSGV and DVSS…LNHL. Residues 2369 to 2394 are compositionally biased toward low complexity; the sequence is MQAQQMQQQQNLQLHQSMQQQHHNSS. Polar residues-rich tracts occupy residues 2395 to 2407 and 2451 to 2471; these read TTST…FCSS and LTPP…SHQL. Residues 2481 to 2496 are compositionally biased toward low complexity; that stretch reads PSPESPDQWSSSSPHS. Polar residues predominate over residues 2497 to 2516; the sequence is NMSDWSEGISSPPTSMQPQR.

It belongs to the NOTCH family. As to quaternary structure, forms a ternary complex with nrarp and rbpj/suh. In terms of processing, O-glycosylated on the EGF-like domains. Contains both O-linked fucose and O-linked glucose. O-linked glycosylation by galnt11 is involved in determination of left/right symmetry: glycosylation promotes activation of notch1, possibly by promoting cleavage by adam17, modulating the balance between motile and immotile (sensory) cilia at the left-right organiser (LRO). Synthesized in the endoplasmic reticulum as an inactive form which is proteolytically cleaved by a furin-like convertase in the trans-Golgi network before it reaches the plasma membrane to yield an active, ligand-accessible form. Cleavage results in a C-terminal fragment N(TM) and a N-terminal fragment N(EC). Following ligand binding, it is cleaved by adam17 to yield a membrane-associated intermediate fragment called notch extracellular truncation (NEXT). Following endocytosis, this fragment is then cleaved by presenilin dependent gamma-secretase to release a Notch-derived peptide containing the intracellular domain (NICD) from the membrane.

It is found in the cell membrane. Its subcellular location is the nucleus. Its function is as follows. Functions as a receptor for membrane-bound ligands Jagged-1 (JAG1), Jagged-2 (JAG2) and Delta-1 (DLL1) to regulate cell-fate determination. Upon ligand activation through the released notch intracellular domain (NICD) it forms a transcriptional activator complex with RBPJ/RBPSUH and activates genes of the enhancer of split locus. Affects the implementation of differentiation, proliferation and apoptotic programs. Involved in angiogenesis; negatively regulates endothelial cell proliferation and migration and angiogenic sprouting. Involved in the maturation of both CD4(+) and CD8(+) cells in the thymus. Important for follicular differentiation and possibly cell fate selection within the follicle. During cerebellar development, functions as a receptor for neuronal DNER and is involved in the differentiation of Bergmann glia. Represses neuronal and myogenic differentiation. May play an essential role in postimplantation development, probably in some aspect of cell specification and/or differentiation. May be involved in mesoderm development, somite formation and neurogenesis. Involved in determination of left/right symmetry by modulating the balance between motile and immotile (sensory) cilia at the left-right organiser (LRO). The chain is Neurogenic locus notch homolog protein 1 (notch1) from Xenopus laevis (African clawed frog).